We begin with the raw amino-acid sequence, 461 residues long: Homocitrate synthase (461 aa).

Residues Val4–Gln259 form the Pyruvate carboxyltransferase domain. A 2-oxoglutarate-binding site is contributed by Arg12. Glu13 is a Mg(2+) binding site. 2-oxoglutarate-binding residues include His76, Arg136, and Thr170. Mg(2+) is bound by residues His198 and His200. The active-site Proton acceptor is His292.

It belongs to the alpha-IPM synthase/homocitrate synthase family. Homocitrate synthase LYS20/LYS21 subfamily. Mg(2+) serves as cofactor. The cofactor is Mn(2+).

It carries out the reaction acetyl-CoA + 2-oxoglutarate + H2O = (2R)-homocitrate + CoA + H(+). The protein operates within amino-acid biosynthesis; L-lysine biosynthesis via AAA pathway; L-alpha-aminoadipate from 2-oxoglutarate: step 1/5. Its function is as follows. Catalyzes the aldol-type condensation of 2-oxoglutarate with acetyl-CoA to yield homocitrate. Carries out the first step of the alpha-aminoadipate (AAA) lysine biosynthesis pathway. The polypeptide is Homocitrate synthase (Saccharolobus islandicus (strain L.S.2.15 / Lassen #1) (Sulfolobus islandicus)).